The chain runs to 214 residues: Melanoregulin (214 aa).

Positions 162 to 172 match the Cholesterol-binding sequence motif motif; it reads LSERYLLVVDR. Ser-213 is modified (phosphoserine).

Belongs to the melanoregulin family. Identified in a complex with RILP and DCTN1; interacts directly with RILP, but does not interact directly with DCTN1. Interacts with PRPH2. Palmitoylated. Palmitoylation is required to maintain the protein at the melanosome membrane. Detected in melanocytes. Expressed in retina, in retinal pigment epithelium (at protein level). Widely expressed with higher expression in skin, heart, liver, testis and thymus. Detected in retina, in retinal pigment epithelium cells.

It is found in the apical cell membrane. Its subcellular location is the melanosome membrane. The protein resides in the lysosome membrane. It localises to the cytoplasmic vesicle membrane. Functionally, probably functions as a cargo-recognition protein that couples cytoplasmic vesicles to the transport machinery. Plays a role in hair pigmentation, a process that involves shedding of melanosome-containing vesicles from melanocytes, followed by phagocytosis of the melanosome-containing vesicles by keratinocytes. Functions on melanosomes as receptor for RILP and the complex formed by RILP and DCTN1, and thereby contributes to retrograde melanosome transport from the cell periphery to the center. Overexpression causes accumulation of late endosomes and/or lysosomes at the microtubule organising center (MTOC) at the center of the cell. Probably binds cholesterol and requires the presence of cholesterol in membranes to function in microtubule-mediated retrograde organelle transport. Binds phosphatidylinositol 3-phosphate, phosphatidylinositol 4-phosphate, phosphatidylinositol 5-phosphate and phosphatidylinositol 3,5-bisphosphate, but not phosphatidylinositol 3,4-bisphosphate or phosphatidylinositol 4,5-bisphosphate. Required for normal phagosome clearing and normal activation of lysosomal enzymes in lysosomes from retinal pigment epithelium cells. Required for normal degradation of the lipofuscin component N-retinylidene-N-retinylethanolamine (A2E) in the eye. May function in membrane fusion and regulate the biogenesis of disk membranes of photoreceptor rod cells. The polypeptide is Melanoregulin (Mreg) (Mus musculus (Mouse)).